The following is a 187-amino-acid chain: Casparian strip membrane protein 5 (187 aa).

At 1-24 the chain is on the cytoplasmic side; that stretch reads MKSGQAEIMETSKGIQKSGLMSRR. A helical transmembrane segment spans residues 25–45; sequence IAILEFILRIVAFFNTIGSAI. Topologically, residues 46 to 74 are extracellular; it reads LMGTTHETLPFFTQFIRFQAEYNDLPALT. The chain crosses the membrane as a helical span at residues 75-95; sequence FFVVANAVVSGYLILSLTLAF. At 96-107 the chain is on the cytoplasmic side; it reads VHIVKRKTQNTR. Residues 108-128 form a helical membrane-spanning segment; the sequence is ILLIILDVAMLGLLTSGASSA. The Extracellular portion of the chain corresponds to 129-161; that stretch reads AAIVYLAHNGNNKTNWFAICQQFNSFCERISGS. The N-linked (GlcNAc...) asparagine glycan is linked to N140. A helical transmembrane segment spans residues 162–182; that stretch reads LIGSFIAIVLLILLILLSAIA. The Cytoplasmic segment spans residues 183 to 187; sequence LSRRH.

It belongs to the Casparian strip membrane proteins (CASP) family. In terms of assembly, homodimer and heterodimers with other CASP proteins. Interacts with CASP1, CASP3 and CASP4.

Its subcellular location is the cell membrane. Regulates membrane-cell wall junctions and localized cell wall deposition. Required for establishment of the Casparian strip membrane domain (CSD) and the subsequent formation of Casparian strips, a cell wall modification of the root endodermis that determines an apoplastic barrier between the intraorganismal apoplasm and the extraorganismal apoplasm and prevents lateral diffusion. This is Casparian strip membrane protein 5 (CASP5) from Arabidopsis thaliana (Mouse-ear cress).